The following is a 270-amino-acid chain: Imidazole glycerol phosphate synthase subunit HisF (270 aa).

Residues D11 and D135 contribute to the active site.

Belongs to the HisA/HisF family. Heterodimer of HisH and HisF.

It is found in the cytoplasm. It carries out the reaction 5-[(5-phospho-1-deoxy-D-ribulos-1-ylimino)methylamino]-1-(5-phospho-beta-D-ribosyl)imidazole-4-carboxamide + L-glutamine = D-erythro-1-(imidazol-4-yl)glycerol 3-phosphate + 5-amino-1-(5-phospho-beta-D-ribosyl)imidazole-4-carboxamide + L-glutamate + H(+). Its pathway is amino-acid biosynthesis; L-histidine biosynthesis; L-histidine from 5-phospho-alpha-D-ribose 1-diphosphate: step 5/9. Its function is as follows. IGPS catalyzes the conversion of PRFAR and glutamine to IGP, AICAR and glutamate. The HisF subunit catalyzes the cyclization activity that produces IGP and AICAR from PRFAR using the ammonia provided by the HisH subunit. The chain is Imidazole glycerol phosphate synthase subunit HisF from Haloquadratum walsbyi (strain DSM 16790 / HBSQ001).